Consider the following 308-residue polypeptide: Probable manganese-dependent inorganic pyrophosphatase (308 aa).

H9, D13, D15, D75, H97, and D149 together coordinate Mn(2+).

The protein belongs to the PPase class C family. Mn(2+) is required as a cofactor.

Its subcellular location is the cytoplasm. It carries out the reaction diphosphate + H2O = 2 phosphate + H(+). The chain is Probable manganese-dependent inorganic pyrophosphatase from Bacillus pumilus (strain SAFR-032).